Here is a 193-residue protein sequence, read N- to C-terminus: Holliday junction branch migration complex subunit RuvA (193 aa).

The tract at residues 1 to 63 (MIAHIQGKLV…EDSHSLYGFA (63 aa)) is domain I. Residues 64-142 (EKSEKEIFKL…KLYDLDQVSI (79 aa)) form a domain II region. The interval 143–145 (SQS) is flexible linker. The domain III stretch occupies residues 145 to 193 (SNTNKDEALSALEVLGFIRKSAEKVVEKIVATMPDATVETIIKQALKNL).

This sequence belongs to the RuvA family. In terms of assembly, homotetramer. Forms an RuvA(8)-RuvB(12)-Holliday junction (HJ) complex. HJ DNA is sandwiched between 2 RuvA tetramers; dsDNA enters through RuvA and exits via RuvB. An RuvB hexamer assembles on each DNA strand where it exits the tetramer. Each RuvB hexamer is contacted by two RuvA subunits (via domain III) on 2 adjacent RuvB subunits; this complex drives branch migration. In the full resolvosome a probable DNA-RuvA(4)-RuvB(12)-RuvC(2) complex forms which resolves the HJ.

The protein resides in the cytoplasm. Functionally, the RuvA-RuvB-RuvC complex processes Holliday junction (HJ) DNA during genetic recombination and DNA repair, while the RuvA-RuvB complex plays an important role in the rescue of blocked DNA replication forks via replication fork reversal (RFR). RuvA specifically binds to HJ cruciform DNA, conferring on it an open structure. The RuvB hexamer acts as an ATP-dependent pump, pulling dsDNA into and through the RuvAB complex. HJ branch migration allows RuvC to scan DNA until it finds its consensus sequence, where it cleaves and resolves the cruciform DNA. The polypeptide is Holliday junction branch migration complex subunit RuvA (Flavobacterium psychrophilum (strain ATCC 49511 / DSM 21280 / CIP 103535 / JIP02/86)).